A 324-amino-acid polypeptide reads, in one-letter code: Ig gamma-1 chain C region secreted form (324 aa).

The CH1 stretch occupies residues 1-97 (AKTTPPSVYP…ASSTKVDKKI (97 aa)). The cysteines at positions 27 and 82 are disulfide-linked. Positions 98-110 (VPRDCGCKPCICT) are hinge. Positions 111–217 (VPEVSSVFIF…PIEKTISKTK (107 aa)) are CH2. Disulfide bonds link cysteine 138/cysteine 198 and cysteine 244/cysteine 302. N-linked (GlcNAc...) asparagine glycosylation is present at asparagine 174. A CH3 region spans residues 218 to 324 (GRPKAPQVYT…EKSLSHSPGK (107 aa)).

It localises to the secreted. This chain is Ig gamma-1 chain C region secreted form (Ighg1), found in Mus musculus (Mouse).